Consider the following 249-residue polypeptide: Coproheme decarboxylase (249 aa).

Fe-coproporphyrin III is bound by residues Arg131, 145–149 (YPMDK), His172, and Gln185. Tyr145 is a catalytic residue.

It belongs to the ChdC family. Type 1 subfamily. Fe-coproporphyrin III serves as cofactor.

The enzyme catalyses Fe-coproporphyrin III + 2 H2O2 + 2 H(+) = heme b + 2 CO2 + 4 H2O. The catalysed reaction is Fe-coproporphyrin III + H2O2 + H(+) = harderoheme III + CO2 + 2 H2O. It catalyses the reaction harderoheme III + H2O2 + H(+) = heme b + CO2 + 2 H2O. It participates in porphyrin-containing compound metabolism; protoheme biosynthesis. Functionally, involved in coproporphyrin-dependent heme b biosynthesis. Catalyzes the decarboxylation of Fe-coproporphyrin III (coproheme) to heme b (protoheme IX), the last step of the pathway. The reaction occurs in a stepwise manner with a three-propionate intermediate. The sequence is that of Coproheme decarboxylase from Staphylococcus epidermidis (strain ATCC 12228 / FDA PCI 1200).